A 314-amino-acid chain; its full sequence is Ecto-ADP-ribosyltransferase 4 (314 aa).

The signal sequence occupies residues 1–46 (MGPLINRCKKILLPTTVPPATMRIWLLGGPLPFLLLLSGLQRPTEG). Disulfide bonds link cysteine 69–cysteine 280 and cysteine 182–cysteine 231. A TR mART core domain is found at 91-276 (KNYFRMWQKA…LQLRSTGNLS (186 aa)). Asparagine 114 carries an N-linked (GlcNAc...) asparagine glycan. Tyrosine 126 contributes to the NAD(+) binding site. The N-linked (GlcNAc...) asparagine glycan is linked to asparagine 178. Residue glutamine 206 coordinates NAD(+). Residue asparagine 222 is glycosylated (N-linked (GlcNAc...) asparagine). An NAD(+)-binding site is contributed by serine 240. N-linked (GlcNAc...) asparagine glycans are attached at residues asparagine 257 and asparagine 274. Alanine 285 carries GPI-anchor amidated alanine lipidation. A propeptide spans 286-314 (SSKKCIPDPIAIASLSFLTSVIIFSKSRV) (removed in mature form).

The protein belongs to the Arg-specific ADP-ribosyltransferase family.

It localises to the cell membrane. The enzyme catalyses L-arginyl-[protein] + NAD(+) = N(omega)-(ADP-D-ribosyl)-L-arginyl-[protein] + nicotinamide + H(+). The sequence is that of Ecto-ADP-ribosyltransferase 4 (ART4) from Pan troglodytes (Chimpanzee).